Here is a 151-residue protein sequence, read N- to C-terminus: Large ribosomal subunit protein bL9 (151 aa).

Belongs to the bacterial ribosomal protein bL9 family.

Functionally, binds to the 23S rRNA. This Desulfosudis oleivorans (strain DSM 6200 / JCM 39069 / Hxd3) (Desulfococcus oleovorans) protein is Large ribosomal subunit protein bL9.